Reading from the N-terminus, the 267-residue chain is Indole-3-glycerol phosphate synthase (267 aa).

Belongs to the TrpC family.

It catalyses the reaction 1-(2-carboxyphenylamino)-1-deoxy-D-ribulose 5-phosphate + H(+) = (1S,2R)-1-C-(indol-3-yl)glycerol 3-phosphate + CO2 + H2O. The protein operates within amino-acid biosynthesis; L-tryptophan biosynthesis; L-tryptophan from chorismate: step 4/5. The chain is Indole-3-glycerol phosphate synthase from Polynucleobacter asymbioticus (strain DSM 18221 / CIP 109841 / QLW-P1DMWA-1) (Polynucleobacter necessarius subsp. asymbioticus).